The following is a 636-amino-acid chain: Basic helix-loop-helix ARNT-like protein 2 (636 aa).

Positions V25–S62 are disordered. The interaction with PER2 stretch occupies residues T46–K258. The short motif at P49 to G54 is the Nuclear localization signal element. The bHLH domain occupies A107 to L160. The Nuclear export signal 1 motif lies at L177–L187. In terms of domain architecture, PAS 1 spans Q178 to P250. Residue K287 forms a Glycyl lysine isopeptide (Lys-Gly) (interchain with G-Cter in SUMO2 and SUMO3) linkage. K294 participates in a covalent cross-link: Glycyl lysine isopeptide (Lys-Gly) (interchain with G-Cter in SUMO2). The PAS 2 domain maps to V357–K427. A Nuclear export signal 2 motif is present at residues L392–L400. Residues T432 to H475 form the PAC domain.

Component of the circadian core oscillator, which includes the CRY proteins, CLOCK, or NPAS2, BMAL1 or BMAL2, CSNK1D and/or CSNK1E, TIMELESS and the PER proteins. Interacts directly with CLOCK to form the BMAL2-CLOCK transactivator. Can form heterodimers or homodimers which interact directly with CLOCK to form the transcription activator. Interacts with NPAS2 and HIF1A. Interacts with PER2. As to expression, expressed in fetal brain. Highly expressed in brain and placenta. Lower levels in heart, liver, thymus, kidney and lung. Located to endothelial cells and neuronal cells of the suprachiasmatic nucleus (SCN). Also detected in endothelial cells of the heart, lung and kidney. In the brain, specifically expressed in the thalamus, hippocampus and amygdala.

Its subcellular location is the nucleus. Functionally, transcriptional activator which forms a core component of the circadian clock. The circadian clock, an internal time-keeping system, regulates various physiological processes through the generation of approximately 24 hour circadian rhythms in gene expression, which are translated into rhythms in metabolism and behavior. It is derived from the Latin roots 'circa' (about) and 'diem' (day) and acts as an important regulator of a wide array of physiological functions including metabolism, sleep, body temperature, blood pressure, endocrine, immune, cardiovascular, and renal function. Consists of two major components: the central clock, residing in the suprachiasmatic nucleus (SCN) of the brain, and the peripheral clocks that are present in nearly every tissue and organ system. Both the central and peripheral clocks can be reset by environmental cues, also known as Zeitgebers (German for 'timegivers'). The predominant Zeitgeber for the central clock is light, which is sensed by retina and signals directly to the SCN. The central clock entrains the peripheral clocks through neuronal and hormonal signals, body temperature and feeding-related cues, aligning all clocks with the external light/dark cycle. Circadian rhythms allow an organism to achieve temporal homeostasis with its environment at the molecular level by regulating gene expression to create a peak of protein expression once every 24 hours to control when a particular physiological process is most active with respect to the solar day. Transcription and translation of core clock components (CLOCK, NPAS2, BMAL1, BMAL2, PER1, PER2, PER3, CRY1 and CRY2) plays a critical role in rhythm generation, whereas delays imposed by post-translational modifications (PTMs) are important for determining the period (tau) of the rhythms (tau refers to the period of a rhythm and is the length, in time, of one complete cycle). A diurnal rhythm is synchronized with the day/night cycle, while the ultradian and infradian rhythms have a period shorter and longer than 24 hours, respectively. Disruptions in the circadian rhythms contribute to the pathology of cardiovascular diseases, cancer, metabolic syndromes and aging. A transcription/translation feedback loop (TTFL) forms the core of the molecular circadian clock mechanism. Transcription factors, CLOCK or NPAS2 and BMAL1 or BMAL2, form the positive limb of the feedback loop, act in the form of a heterodimer and activate the transcription of core clock genes and clock-controlled genes (involved in key metabolic processes), harboring E-box elements (5'-CACGTG-3') within their promoters. The core clock genes: PER1/2/3 and CRY1/2 which are transcriptional repressors form the negative limb of the feedback loop and interact with the CLOCK|NPAS2-BMAL1|BMAL2 heterodimer inhibiting its activity and thereby negatively regulating their own expression. This heterodimer also activates nuclear receptors NR1D1/2 and RORA/B/G, which form a second feedback loop and which activate and repress BMAL1 transcription, respectively. The CLOCK-BMAL2 heterodimer activates the transcription of SERPINE1/PAI1 and BHLHE40/DEC1. The chain is Basic helix-loop-helix ARNT-like protein 2 from Homo sapiens (Human).